The chain runs to 594 residues: MGKLGKKARKFAKKNLQSVEKRSRKLKPFIKKKFAKRNERHQAGDKQEKKVEQQPKKRCQEEEFQDIAIDAVFGKDDDEVLRDGDSDSDGYLDELVNETDSDIMKCKVLSRSFLATCCDMVDKEQYVPALVRLLNWYRAACQYGHEPSGIARPNIYYDIEDSETFAKVIIFVLQKADHTFRSILGLSDSSTKEKILKLKNNPKWDSLKPLVKSFFRSTLHLVKQAGDLEIISFTLTQLRVSIVFLAAFPDLLKKLIKISVHLWVTGEETISQQAFLILKDISMVFNSECFDSCLINMYKAFLHDCDIPKANSEQRPFLRDSLVELCSQDVQKSYTKASVSITQLAKLLKMALATKNKEAVEKIHSGEYINCVDLWVNFISANVQDCDLQPLLYTIVQVINGVAQLIIGPRYLLLRVKCIHWLNHLSRTSGIFIPIASLVLDMLEYKTTNDGEKQEQKLEAVSTVKLPKNWLKSQNFQEQCIFSVIELLAVHFAQWSFHISFPDLATIPVMRLKKFHERSTMEGLKRVVKRFIEQVESNIEFVQRKRDDVTFSPNDQQSADTFMQLEKQNANAPYTQYYQSIIDKALGTNKKKKK.

The span at 1 to 13 (MGKLGKKARKFAK) shows a compositional bias: basic residues. Disordered regions lie at residues 1-21 (MGKLGKKARKFAKKNLQSVEK) and 35-58 (AKRNERHQAGDKQEKKVEQQPKKR). 3 short sequence motifs (nuclear localization signal) span residues 8 to 15 (ARKFAKKN), 35 to 42 (AKRNERHQ), and 512 to 519 (LKKFHERS). Residues 36 to 58 (KRNERHQAGDKQEKKVEQQPKKR) show a composition bias toward basic and acidic residues.

This sequence belongs to the NOC2 family. In terms of assembly, interacts with SWA2, NOC2 and NOC3 in both the nucleolus and nucleoplasm. Binds to ENAP1 and OBE1. In terms of tissue distribution, expressed at low levels in roots, shoots, leaves, stems, inflorescences, flowers and siliques, with highest levels dividing tissues.

The protein localises to the nucleus. Its subcellular location is the nucleolus. It is found in the nucleoplasm. Functionally, collaboratively with CYP40/SQN and ULT1, influences floral meristem (FM) determinacy in an AGAMOUS and SUPERMAN-dependent manner, thus contributing to the floral developmental homeostasis. This is Protein REBELOTE from Arabidopsis thaliana (Mouse-ear cress).